An 853-amino-acid chain; its full sequence is DNA mismatch repair protein MutS (853 aa).

Residue 614–621 (GPNMGGKS) coordinates ATP.

It belongs to the DNA mismatch repair MutS family.

Its function is as follows. This protein is involved in the repair of mismatches in DNA. It is possible that it carries out the mismatch recognition step. This protein has a weak ATPase activity. The sequence is that of DNA mismatch repair protein MutS from Escherichia coli O157:H7 (strain EC4115 / EHEC).